Consider the following 357-residue polypeptide: tRNA pseudouridine synthase Pus10 (357 aa).

Positions 1 to 118 constitute a THUMP domain; sequence MNLCRECYGI…TFTFELQIRP (118 aa). Asp187 serves as the catalytic Nucleophile. Substrate-binding residues include Tyr251 and Tyr322.

The protein belongs to the pseudouridine synthase Pus10 family.

It carries out the reaction uridine(54) in tRNA = pseudouridine(54) in tRNA. It catalyses the reaction uridine(55) in tRNA = pseudouridine(55) in tRNA. Functionally, responsible for synthesis of pseudouridine from uracil-54 and uracil-55 in the psi GC loop of transfer RNAs. This Archaeoglobus fulgidus (strain ATCC 49558 / DSM 4304 / JCM 9628 / NBRC 100126 / VC-16) protein is tRNA pseudouridine synthase Pus10.